The primary structure comprises 429 residues: Glutamate-1-semialdehyde 2,1-aminomutase (429 aa).

N6-(pyridoxal phosphate)lysine is present on K265.

The protein belongs to the class-III pyridoxal-phosphate-dependent aminotransferase family. HemL subfamily. In terms of assembly, homodimer. It depends on pyridoxal 5'-phosphate as a cofactor.

It is found in the cytoplasm. The catalysed reaction is (S)-4-amino-5-oxopentanoate = 5-aminolevulinate. It functions in the pathway porphyrin-containing compound metabolism; protoporphyrin-IX biosynthesis; 5-aminolevulinate from L-glutamyl-tRNA(Glu): step 2/2. This Shewanella pealeana (strain ATCC 700345 / ANG-SQ1) protein is Glutamate-1-semialdehyde 2,1-aminomutase.